The chain runs to 111 residues: MKGGMAGLMKQAQQMQEKMAKMQEELANAEVTGKAGGDMVTVVMTGRHDIKRVSIDPSLLEGVSEDDREVLEDLFAAAVNDAVRKIESNSQEKMSGMTAGMQLPPGMKLPF.

Disordered regions lie at residues Met-1–Ala-20 and Ser-88–Phe-111.

The protein belongs to the YbaB/EbfC family. In terms of assembly, homodimer.

The protein localises to the cytoplasm. The protein resides in the nucleoid. Binds to DNA and alters its conformation. May be involved in regulation of gene expression, nucleoid organization and DNA protection. The polypeptide is Nucleoid-associated protein PFL_1905 (Pseudomonas fluorescens (strain ATCC BAA-477 / NRRL B-23932 / Pf-5)).